The primary structure comprises 288 residues: Glycine--tRNA ligase alpha subunit (288 aa).

This sequence belongs to the class-II aminoacyl-tRNA synthetase family. Tetramer of two alpha and two beta subunits.

Its subcellular location is the cytoplasm. The catalysed reaction is tRNA(Gly) + glycine + ATP = glycyl-tRNA(Gly) + AMP + diphosphate. This is Glycine--tRNA ligase alpha subunit from Rickettsia massiliae (strain Mtu5).